A 252-amino-acid polypeptide reads, in one-letter code: F-box/SPRY domain-containing protein 1 (252 aa).

Positions 1-48 (MVDPLCNYNVLESIFSYLELNDLNRCSQVCKSWYHFLNDENSDVWRWH) constitute an F-box domain. The B30.2/SPRY domain maps to 58–250 (VKSDLLSSVT…VSMVYLGTPL (193 aa)).

The protein belongs to the FBXO45/Fsn family. In terms of assembly, component of an E3 ubiquitin ligase complex composed of hiw and Fsn.

Its subcellular location is the synapse. The protein operates within protein modification; protein ubiquitination. Its function is as follows. Required in the presynaptic motoneuron to down-regulate the levels of wnd and restrain synaptic terminal growth at the neuromuscular junction (NMJ). The polypeptide is F-box/SPRY domain-containing protein 1 (Drosophila grimshawi (Hawaiian fruit fly)).